Reading from the N-terminus, the 106-residue chain is uncharacterized protein (106 aa).

Residues methionine 1 to threonine 31 form the signal peptide.

This is an uncharacterized protein from Bacillus subtilis (strain 168).